Here is a 335-residue protein sequence, read N- to C-terminus: G-protein coupled receptor 157 (335 aa).

The Extracellular segment spans residues 1-15 (MQPSPPPTELVPSER). The chain crosses the membrane as a helical span at residues 16-36 (AVVLLSCALSALGSGLLVATH). The Cytoplasmic portion of the chain corresponds to 37–48 (ALWPDLRSRARR). The chain crosses the membrane as a helical span at residues 49–69 (LLLFLSLADLLSAASYFYGVL). The Extracellular segment spans residues 70–87 (QNFAGPSWDCVLQGALST). A helical membrane pass occupies residues 88–108 (FANTSSFFWTVAIALYLYLSI). Residues 109–119 (VRAARGPRTDR) are Cytoplasmic-facing. Residues 120–140 (LLWAFHVVSWGVPLVITVAAV) traverse the membrane as a helical segment. The Extracellular segment spans residues 141 to 166 (ALKKIGYDASDVSVGWCWIDLEAKDH). The helical transmembrane segment at 167–187 (VLWMLLTGKLWEMLAYVLLPL) threads the bilayer. At 188-226 (LYLLVRKHINRAHTALSEYRPILSQEHRLLRHSSMADKK) the chain is on the cytoplasmic side. The chain crosses the membrane as a helical span at residues 227 to 247 (LVLIPLIFIGLRVWSTVRFVL). Topologically, residues 248 to 258 (TLCGSPAVQTP) are extracellular. A helical transmembrane segment spans residues 259–279 (VLVVLHGIGNTFQGGANCIMF). Residues 280–335 (VLCTRAVRTRLFSLCCCCCSSQPPTKSPAGTPKAPAPSKPGESQESQGTPGELPST) are Cytoplasmic-facing. Positions 300–335 (SQPPTKSPAGTPKAPAPSKPGESQESQGTPGELPST) are disordered. A compositionally biased stretch (polar residues) spans 320–335 (GESQESQGTPGELPST).

The protein belongs to the G-protein coupled receptor 2 family.

Its subcellular location is the cell projection. The protein localises to the cilium membrane. In terms of biological role, orphan receptor that promotes neuronal differentiation of radial glial progenitors (RGPs). The activity of this receptor is mediated by a G(q)-protein that activates a phosphatidylinositol-calcium second messenger. This is G-protein coupled receptor 157 (GPR157) from Homo sapiens (Human).